The sequence spans 410 residues: Monoglucosyldiacylglycerol epimerase (410 aa).

Residues 1–14 (MAMAWLMGLGLALA) form the signal peptide. 2 helical membrane-spanning segments follow: residues 71–91 (ALVMLAFGIWPPLLTWMWQGF) and 96–116 (LILAASAGMVYTLGFLLSAIA). Y320 serves as the catalytic Proton acceptor. A helical membrane pass occupies residues 380–400 (IIVTINPITFIAFPVKEFFVS).

It belongs to the short-chain dehydrogenases/reductases (SDR) family.

The protein resides in the membrane. It carries out the reaction a 1,2-diacyl-3-O-(beta-D-glucopyranosyl)-sn-glycerol = a 1,2-diacyl-3-O-(beta-D-galactosyl)-sn-glycerol. Its function is as follows. Involved in the biosynthesis of galactolipids found in the photosynthetic membranes. Catalyzes the isomerization of monoglucosyldiacylglycerol (GlcDG) to yield monogalactosyldiacylglycerol (MGDG). In Synechocystis sp. (strain ATCC 27184 / PCC 6803 / Kazusa), this protein is Monoglucosyldiacylglycerol epimerase.